The primary structure comprises 423 residues: GTPase HflX (423 aa).

In terms of domain architecture, Hflx-type G spans 202–366 (PAAAIVGYTN…LLETILRNQK (165 aa)). GTP-binding positions include 208 to 215 (GYTNAGKS), 233 to 237 (FATLD), 255 to 258 (DTVG), 321 to 324 (NKID), and 344 to 346 (SAK). Positions 215 and 235 each coordinate Mg(2+).

It belongs to the TRAFAC class OBG-HflX-like GTPase superfamily. HflX GTPase family. Monomer. Associates with the 50S ribosomal subunit. Mg(2+) is required as a cofactor.

The protein localises to the cytoplasm. Its function is as follows. GTPase that associates with the 50S ribosomal subunit and may have a role during protein synthesis or ribosome biogenesis. The sequence is that of GTPase HflX from Lacrimispora saccharolytica (strain ATCC 35040 / DSM 2544 / NRCC 2533 / WM1) (Clostridium saccharolyticum).